A 154-amino-acid polypeptide reads, in one-letter code: Superoxide dismutase [Cu-Zn] (154 aa).

The Cu cation site is built by histidine 47, histidine 49, and histidine 64. An intrachain disulfide couples cysteine 58 to cysteine 147. Positions 64, 72, 81, and 84 each coordinate Zn(2+). Histidine 121 contacts Cu cation. The span at 125–136 shows a compositional bias: basic and acidic residues; sequence DDLGKGGNEESL. Positions 125–144 are disordered; that stretch reads DDLGKGGNEESLKTGNAGPR. Arginine 144 is a binding site for substrate.

It belongs to the Cu-Zn superoxide dismutase family. In terms of assembly, homodimer. Requires Cu cation as cofactor. It depends on Zn(2+) as a cofactor.

The protein resides in the cytoplasm. The catalysed reaction is 2 superoxide + 2 H(+) = H2O2 + O2. Functionally, destroys radicals which are normally produced within the cells and which are toxic to biological systems. The chain is Superoxide dismutase [Cu-Zn] (SOD1) from Cordyceps tenuipes (Entomopathogenic fungus).